The chain runs to 232 residues: 6-hydroxymethyl-7,8-dihydropterin pyrophosphokinase (232 aa).

The protein belongs to the archaeal 6-HMPDK family. It depends on Mg(2+) as a cofactor.

It carries out the reaction 6-hydroxymethyl-7,8-dihydropterin + ATP = (7,8-dihydropterin-6-yl)methyl diphosphate + AMP + H(+). Its pathway is cofactor biosynthesis; 5,6,7,8-tetrahydromethanopterin biosynthesis. Catalyzes the transfer of diphosphate from ATP to 6-hydroxymethyl-7,8-dihydropterin (6-HMD), leading to 6-hydroxymethyl-7,8-dihydropterin diphosphate (6-HMDP). The sequence is that of 6-hydroxymethyl-7,8-dihydropterin pyrophosphokinase from Methanothermobacter thermautotrophicus (strain ATCC 29096 / DSM 1053 / JCM 10044 / NBRC 100330 / Delta H) (Methanobacterium thermoautotrophicum).